The following is a 247-amino-acid chain: Triosephosphate isomerase (247 aa).

Asn-8 to Lys-10 provides a ligand contact to substrate. Residue His-95 is the Electrophile of the active site. Glu-162 (proton acceptor) is an active-site residue. Positions 168 and 207 each coordinate substrate.

This sequence belongs to the triosephosphate isomerase family. In terms of assembly, homodimer.

The protein localises to the cytoplasm. It carries out the reaction D-glyceraldehyde 3-phosphate = dihydroxyacetone phosphate. It participates in carbohydrate biosynthesis; gluconeogenesis. The protein operates within carbohydrate degradation; glycolysis; D-glyceraldehyde 3-phosphate from glycerone phosphate: step 1/1. Functionally, involved in the gluconeogenesis. Catalyzes stereospecifically the conversion of dihydroxyacetone phosphate (DHAP) to D-glyceraldehyde-3-phosphate (G3P). In Gluconacetobacter diazotrophicus (strain ATCC 49037 / DSM 5601 / CCUG 37298 / CIP 103539 / LMG 7603 / PAl5), this protein is Triosephosphate isomerase.